The sequence spans 375 residues: Probable UDP-N-acetylglucosamine 2-epimerase (375 aa).

Belongs to the UDP-N-acetylglucosamine 2-epimerase family.

Its subcellular location is the cytoplasm. The enzyme catalyses UDP-N-acetyl-alpha-D-glucosamine = UDP-N-acetyl-alpha-D-mannosamine. It functions in the pathway glycan metabolism; exopolysaccharide EPS I biosynthesis. Functionally, may be involved in synthesis of N-acetyltrideoxygalactose, a component of exopolysaccharide EPS I which functions as a virulence factor. The polypeptide is Probable UDP-N-acetylglucosamine 2-epimerase (epsC) (Ralstonia solanacearum (Pseudomonas solanacearum)).